Here is a 252-residue protein sequence, read N- to C-terminus: 5'-nucleotidase SurE (252 aa).

Asp8, Asp9, Ser39, and Asn95 together coordinate a divalent metal cation.

It belongs to the SurE nucleotidase family. It depends on a divalent metal cation as a cofactor.

Its subcellular location is the cytoplasm. It carries out the reaction a ribonucleoside 5'-phosphate + H2O = a ribonucleoside + phosphate. In terms of biological role, nucleotidase that shows phosphatase activity on nucleoside 5'-monophosphates. This is 5'-nucleotidase SurE from Clostridium botulinum (strain ATCC 19397 / Type A).